A 184-amino-acid polypeptide reads, in one-letter code: uncharacterized protein (184 aa).

To M.tuberculosis Rv0487.

This is an uncharacterized protein from Mycobacterium leprae (strain TN).